A 461-amino-acid polypeptide reads, in one-letter code: MTASLWQQCLTRLQEELPSGEFGLWIRPLQAEFGDRSLTLYAANRFILDWVRDKYLLRINSLFTEICGADAPTLHFAVGRRPTAATVQMNTAAAPVADVRIGPAITVPSWTSKQDAMPEINHKSNINETYTFENFVEGKSNQLALAAAHQVAENPGGAYNPLFLYGGTGLGKTHLLHAVGNGIRARKPNAKVIYMQSERFVQDMVKALQNNAIQEFQRYYRSVDALLIDDIQFFAKKERSQEEFFHTFNALLEGNQQIILTSDRYPKEIDGVEDRLKSRFGWGLTIAIEPPELETRVAILMRKAEENKIHLPHEVAFFIAKRLRSNVRELEGALNRVIANARFTGKPINIDFVREALRDMLALQEKLVTIENIQKTVAEYYKIKVADLLSKRRSRSVARPRQLAMALAKELTNHSLPEIGDAFGGRDHTTVLHACRKIAELREESNDIKEDYSNLIRTLSS.

Residues 1 to 83 are domain I, interacts with DnaA modulators; the sequence is MTASLWQQCL…LHFAVGRRPT (83 aa). The tract at residues 83-124 is domain II; that stretch reads TAATVQMNTAAAPVADVRIGPAITVPSWTSKQDAMPEINHKS. Residues 125–341 form a domain III, AAA+ region region; sequence NINETYTFEN…GALNRVIANA (217 aa). Gly-169, Gly-171, Lys-172, and Thr-173 together coordinate ATP. A domain IV, binds dsDNA region spans residues 342-461; the sequence is RFTGKPINID…YSNLIRTLSS (120 aa).

This sequence belongs to the DnaA family. As to quaternary structure, oligomerizes as a right-handed, spiral filament on DNA at oriC.

The protein resides in the cytoplasm. Plays an essential role in the initiation and regulation of chromosomal replication. ATP-DnaA binds to the origin of replication (oriC) to initiate formation of the DNA replication initiation complex once per cell cycle. Binds the DnaA box (a 9 base pair repeat at the origin) and separates the double-stranded (ds)DNA. Forms a right-handed helical filament on oriC DNA; dsDNA binds to the exterior of the filament while single-stranded (ss)DNA is stabiized in the filament's interior. The ATP-DnaA-oriC complex binds and stabilizes one strand of the AT-rich DNA unwinding element (DUE), permitting loading of DNA polymerase. After initiation quickly degrades to an ADP-DnaA complex that is not apt for DNA replication. Binds acidic phospholipids. The chain is Chromosomal replication initiator protein DnaA from Tolumonas auensis (strain DSM 9187 / NBRC 110442 / TA 4).